A 689-amino-acid polypeptide reads, in one-letter code: Small ribosomal subunit protein mS39 (689 aa).

The transit peptide at 1–37 directs the protein to the mitochondrion; the sequence is MAGVSAVRWLGLRSRLGQPLTGRRAGLCKQARSCRFY. Lysine 126 is modified (N6-acetyllysine). 10 PPR repeats span residues 149 to 183, 184 to 219, 255 to 289, 290 to 330, 331 to 367, 368 to 404, 412 to 446, 454 to 488, 489 to 523, and 572 to 606; these read IKDI…GTTV, SLET…EALE, NAHS…RLHA, DVYT…KVKP, NLQT…GIEP, SLAT…MGKR, DDKF…DNWK, RNFY…VYFP, HSQT…GHTF, and PATS…NKIP. Residues 665–689 are disordered; that stretch reads NLTALTSDSDTDSSSDSDSDTSEGK. Positions 673–689 are enriched in acidic residues; the sequence is SDTDSSSDSDSDTSEGK.

This sequence belongs to the mitochondrion-specific ribosomal protein mS39 family. In terms of assembly, component of the mitochondrial ribosome small subunit (28S) which comprises a 12S rRNA and about 30 distinct proteins. Associated with the 12S mitochondrial rRNA (12S mt-rRNA).

The protein resides in the mitochondrion. Its function is as follows. Mitochondrial RNA-binding protein that has a role in mitochondrial translation. The protein is Small ribosomal subunit protein mS39 (PTCD3) of Pongo abelii (Sumatran orangutan).